The following is a 210-amino-acid chain: MSTDAIAHEMPRLKKQYREQIRAAMQEEFGYRNPMLIPGLEKIVVNMGVGDAAHDSKVMDGAIRDITAITGQKPQVTKARKSIAQFKLREGQPIGCHVTLRGDRMWEFADRLLTLALPRIRDFRGLNSNQFDGKGNYTFGLSEQVMFLEIDQDKIVRIRGMDITFVTTAQTNEEGKALLKHLGFPFKAKDDPKKAKTKRGPAYYAKKKKK.

Positions 188 to 210 (AKDDPKKAKTKRGPAYYAKKKKK) are disordered. A compositionally biased stretch (basic residues) spans 195-210 (AKTKRGPAYYAKKKKK).

The protein belongs to the universal ribosomal protein uL5 family. As to quaternary structure, part of the 50S ribosomal subunit; part of the 5S rRNA/L5/L18/L25 subcomplex. Contacts the 5S rRNA and the P site tRNA. Forms a bridge to the 30S subunit in the 70S ribosome.

Its function is as follows. This is one of the proteins that bind and probably mediate the attachment of the 5S RNA into the large ribosomal subunit, where it forms part of the central protuberance. In the 70S ribosome it contacts protein S13 of the 30S subunit (bridge B1b), connecting the 2 subunits; this bridge is implicated in subunit movement. Contacts the P site tRNA; the 5S rRNA and some of its associated proteins might help stabilize positioning of ribosome-bound tRNAs. The sequence is that of Large ribosomal subunit protein uL5 from Cutibacterium acnes (strain DSM 16379 / KPA171202) (Propionibacterium acnes).